The following is a 475-amino-acid chain: Putative aldehyde dehydrogenase (475 aa).

Residues 146-147 (WN) and 223-224 (GS) contribute to the NAD(+) site. Residue E245 is the Proton acceptor of the active site. L246 provides a ligand contact to NAD(+). The active-site Nucleophile is C279. E379 is an NAD(+) binding site.

The protein belongs to the aldehyde dehydrogenase family.

The enzyme catalyses an aldehyde + NAD(+) + H2O = a carboxylate + NADH + 2 H(+). The chain is Putative aldehyde dehydrogenase from Staphylococcus aureus (strain MSSA476).